The primary structure comprises 463 residues: uncharacterized protein (463 aa).

A signal peptide spans 1–23 (MKFSSIPIASTLLSLLVASSVTA). 2 disordered regions span residues 174-200 (STYN…TKAS) and 239-258 (GAST…QRKN).

Belongs to the but2 family.

It is found in the cytoplasm. This is an uncharacterized protein from Schizosaccharomyces pombe (strain 972 / ATCC 24843) (Fission yeast).